Here is a 302-residue protein sequence, read N- to C-terminus: GTPase Era (302 aa).

Positions 9 to 177 (YCGFIAIVGR…EKIVRQSLRE (169 aa)) constitute an Era-type G domain. The G1 stretch occupies residues 17 to 24 (GRPNVGKS). GTP is bound at residue 17–24 (GRPNVGKS). The tract at residues 43–47 (QTTRH) is G2. The tract at residues 64–67 (DTPG) is G3. GTP-binding positions include 64 to 68 (DTPGL) and 126 to 129 (NKVD). Residues 126–129 (NKVD) form a G4 region. Residues 156 to 158 (ISA) are G5. Residues 208-285 (TGEELPYSVT…HLELWVKVKS (78 aa)) form the KH type-2 domain.

Belongs to the TRAFAC class TrmE-Era-EngA-EngB-Septin-like GTPase superfamily. Era GTPase family. As to quaternary structure, monomer.

The protein resides in the cytoplasm. The protein localises to the cell inner membrane. In terms of biological role, an essential GTPase that binds both GDP and GTP, with rapid nucleotide exchange. Plays a role in 16S rRNA processing and 30S ribosomal subunit biogenesis and possibly also in cell cycle regulation and energy metabolism. This Haemophilus influenzae (strain PittGG) protein is GTPase Era.